The following is a 189-amino-acid chain: Probable nicotinate-nucleotide adenylyltransferase (189 aa).

This sequence belongs to the NadD family.

It catalyses the reaction nicotinate beta-D-ribonucleotide + ATP + H(+) = deamido-NAD(+) + diphosphate. It participates in cofactor biosynthesis; NAD(+) biosynthesis; deamido-NAD(+) from nicotinate D-ribonucleotide: step 1/1. Functionally, catalyzes the reversible adenylation of nicotinate mononucleotide (NaMN) to nicotinic acid adenine dinucleotide (NaAD). The protein is Probable nicotinate-nucleotide adenylyltransferase of Ruegeria sp. (strain TM1040) (Silicibacter sp.).